Reading from the N-terminus, the 908-residue chain is DNA mismatch repair protein MutS (908 aa).

Residue 662-669 (GPNMGGKS) participates in ATP binding.

Belongs to the DNA mismatch repair MutS family.

Its function is as follows. This protein is involved in the repair of mismatches in DNA. It is possible that it carries out the mismatch recognition step. This protein has a weak ATPase activity. In Rhizobium etli (strain ATCC 51251 / DSM 11541 / JCM 21823 / NBRC 15573 / CFN 42), this protein is DNA mismatch repair protein MutS.